The primary structure comprises 257 residues: NAD-capped RNA hydrolase NudC (257 aa).

Residues Lys-27 and Arg-71 each coordinate substrate. Cys-100 and Cys-103 together coordinate Zn(2+). Glu-113 is a substrate binding site. Cys-118 and Cys-121 together coordinate Zn(2+). Position 126 (Tyr-126) interacts with substrate. The region spanning 127 to 251 is the Nudix hydrolase domain; sequence PQIAPCIIVG…IARRLIEDTI (125 aa). Ala-160, Glu-176, and Glu-180 together coordinate a divalent metal cation. The Nudix box signature appears at 161 to 182; the sequence is GFVEVGETLEEAVVREVMEESN. 194-201 serves as a coordination point for substrate; sequence QPWPFPHS. An a divalent metal cation-binding site is contributed by Glu-221. Position 243 (Ala-243) interacts with substrate.

Belongs to the Nudix hydrolase family. NudC subfamily. Homodimer. It depends on Mg(2+) as a cofactor. Mn(2+) is required as a cofactor. Zn(2+) serves as cofactor.

The enzyme catalyses a 5'-end NAD(+)-phospho-ribonucleoside in mRNA + H2O = a 5'-end phospho-adenosine-phospho-ribonucleoside in mRNA + beta-nicotinamide D-ribonucleotide + 2 H(+). It catalyses the reaction NAD(+) + H2O = beta-nicotinamide D-ribonucleotide + AMP + 2 H(+). It carries out the reaction NADH + H2O = reduced beta-nicotinamide D-ribonucleotide + AMP + 2 H(+). Its function is as follows. mRNA decapping enzyme that specifically removes the nicotinamide adenine dinucleotide (NAD) cap from a subset of mRNAs by hydrolyzing the diphosphate linkage to produce nicotinamide mononucleotide (NMN) and 5' monophosphate mRNA. The NAD-cap is present at the 5'-end of some mRNAs and stabilizes RNA against 5'-processing. Has preference for mRNAs with a 5'-end purine. Catalyzes the hydrolysis of a broad range of dinucleotide pyrophosphates. This chain is NAD-capped RNA hydrolase NudC, found in Photorhabdus laumondii subsp. laumondii (strain DSM 15139 / CIP 105565 / TT01) (Photorhabdus luminescens subsp. laumondii).